A 572-amino-acid chain; its full sequence is MTTASQQTSSHSTASSTSRKGNNNDATPSLKELQLANRTLGTRNAKLVEMLKASRDKLDALNEQIRALSDPPSTYGTLLELNPGGHSAEVFTSNRRMRLVVAPGVDTSQLTPGALVRLGEGQEVVEHCGFSDFGDIAVVKEFLPGGSRVVVADTMGDLRVLKIAAPLYELWSQKNVGAGDQVLVDYRAGYAFESIPKADVENLILEEIPEVSYEDIGGLHNQIEMIHDAVELPFTHPDLYRKFDLQPPKGVLLYGPPGCGKTLIAKAVAHSLAEKMGSGGESYFLNIKGPELLNKFVGETERQIRQIFDRARSIAEDGRPVIVFFDEMDAIFRTRGSGISSDLENTVVPQLLSEIDGVEDLRNVIVIGASNREEMIDPAILRPGRLDVKIRVERPDEKSAREIAELYLVDTLPLDPALVEETGDRHAAVAALIDELSSRMYAQHSDNEFVELTFVDGSREVLYYRDFASGAMIANIVDRAKKNALKRALASGQPDNHGVSLEDVRTAVDQEFAENDDLPNTANPDEWARISGRTGQRVTEVTVAHHNRKTTTETEATEPEGTDSGKGHTDAS.

Low complexity predominate over residues 1-18 (MTTASQQTSSHSTASSTS). The disordered stretch occupies residues 1–30 (MTTASQQTSSHSTASSTSRKGNNNDATPSL). Residues 42 to 70 (TRNAKLVEMLKASRDKLDALNEQIRALSD) adopt a coiled-coil conformation. An ATP-binding site is contributed by 258–263 (GCGKTL). A disordered region spans residues 543 to 572 (VAHHNRKTTTETEATEPEGTDSGKGHTDAS). A compositionally biased stretch (basic and acidic residues) spans 563–572 (DSGKGHTDAS).

It belongs to the AAA ATPase family. In terms of assembly, homohexamer. Assembles into a hexameric ring structure.

In Corynebacterium kroppenstedtii (strain DSM 44385 / JCM 11950 / CIP 105744 / CCUG 35717), this protein is AAA ATPase forming ring-shaped complexes.